The chain runs to 187 residues: Elongation factor P (187 aa).

The protein belongs to the elongation factor P family.

It is found in the cytoplasm. The protein operates within protein biosynthesis; polypeptide chain elongation. Involved in peptide bond synthesis. Stimulates efficient translation and peptide-bond synthesis on native or reconstituted 70S ribosomes in vitro. Probably functions indirectly by altering the affinity of the ribosome for aminoacyl-tRNA, thus increasing their reactivity as acceptors for peptidyl transferase. The sequence is that of Elongation factor P from Bifidobacterium animalis subsp. lactis (strain AD011).